Consider the following 369-residue polypeptide: Phospho-N-acetylmuramoyl-pentapeptide-transferase (369 aa).

10 helical membrane passes run 2-22 (IALLIGAGVALLVALIGTPLF), 55-75 (TVVVAAVLISYFVTHLIMWMM), 86-106 (GLLLLFLMVGMGFVGFLDDFI), 120-140 (AKLILQAAVGIIFAVLVLQFP), 163-183 (LAFGGTVVGAILFVLWSNLII), 196-216 (LDGLAAGASIMVFGAYTIMGI), 239-259 (PMDLALLAAILSAALVGFLWW), 266-286 (IFMGDTGSLAIGGAVAAFAIL), 291-311 (LLLAFIGGLFVLITLSVIIQV), and 348-368 (ILAGLFVAAGLGIFYAEWVVL).

Belongs to the glycosyltransferase 4 family. MraY subfamily. It depends on Mg(2+) as a cofactor.

The protein localises to the cell membrane. The enzyme catalyses UDP-N-acetyl-alpha-D-muramoyl-L-alanyl-gamma-D-glutamyl-meso-2,6-diaminopimeloyl-D-alanyl-D-alanine + di-trans,octa-cis-undecaprenyl phosphate = di-trans,octa-cis-undecaprenyl diphospho-N-acetyl-alpha-D-muramoyl-L-alanyl-D-glutamyl-meso-2,6-diaminopimeloyl-D-alanyl-D-alanine + UMP. It functions in the pathway cell wall biogenesis; peptidoglycan biosynthesis. Functionally, catalyzes the initial step of the lipid cycle reactions in the biosynthesis of the cell wall peptidoglycan: transfers peptidoglycan precursor phospho-MurNAc-pentapeptide from UDP-MurNAc-pentapeptide onto the lipid carrier undecaprenyl phosphate, yielding undecaprenyl-pyrophosphoryl-MurNAc-pentapeptide, known as lipid I. This Paenarthrobacter aurescens (strain TC1) protein is Phospho-N-acetylmuramoyl-pentapeptide-transferase.